The following is a 122-amino-acid chain: MWLLDQWAERHIAEAQAKGEFDNLAGSGEPLILDDDSHVPPELRAGYRLLKNAGCLPPELEQRREAIQLLDILKGIRHDDPQYQEVSRRLSLLELKLRQAGLSTDFLRGDYADKLLDKINDN.

This is an uncharacterized protein from Escherichia coli (strain K12).